The sequence spans 377 residues: Succinyl-diaminopimelate desuccinylase (377 aa).

A Zn(2+)-binding site is contributed by His-66. The active site involves Asp-68. Zn(2+) is bound at residue Asp-99. Glu-133 functions as the Proton acceptor in the catalytic mechanism. Glu-134, Glu-162, and His-348 together coordinate Zn(2+).

The protein belongs to the peptidase M20A family. DapE subfamily. Homodimer. Zn(2+) is required as a cofactor. The cofactor is Co(2+).

It catalyses the reaction N-succinyl-(2S,6S)-2,6-diaminopimelate + H2O = (2S,6S)-2,6-diaminopimelate + succinate. It participates in amino-acid biosynthesis; L-lysine biosynthesis via DAP pathway; LL-2,6-diaminopimelate from (S)-tetrahydrodipicolinate (succinylase route): step 3/3. Catalyzes the hydrolysis of N-succinyl-L,L-diaminopimelic acid (SDAP), forming succinate and LL-2,6-diaminopimelate (DAP), an intermediate involved in the bacterial biosynthesis of lysine and meso-diaminopimelic acid, an essential component of bacterial cell walls. The sequence is that of Succinyl-diaminopimelate desuccinylase from Xylella fastidiosa (strain 9a5c).